Here is a 452-residue protein sequence, read N- to C-terminus: 3-phosphoshikimate 1-carboxyvinyltransferase (452 aa).

Residues Lys-24, Ser-25, and Arg-29 each contribute to the 3-phosphoshikimate site. Residue Lys-24 participates in phosphoenolpyruvate binding. Phosphoenolpyruvate is bound by residues Gly-95 and Arg-123. Residues Ser-167, Gln-169, Asp-319, and Lys-346 each contribute to the 3-phosphoshikimate site. Gln-169 provides a ligand contact to phosphoenolpyruvate. The Proton acceptor role is filled by Asp-319. Arg-350 and Arg-394 together coordinate phosphoenolpyruvate.

Belongs to the EPSP synthase family. Monomer.

Its subcellular location is the cytoplasm. The catalysed reaction is 3-phosphoshikimate + phosphoenolpyruvate = 5-O-(1-carboxyvinyl)-3-phosphoshikimate + phosphate. It participates in metabolic intermediate biosynthesis; chorismate biosynthesis; chorismate from D-erythrose 4-phosphate and phosphoenolpyruvate: step 6/7. Catalyzes the transfer of the enolpyruvyl moiety of phosphoenolpyruvate (PEP) to the 5-hydroxyl of shikimate-3-phosphate (S3P) to produce enolpyruvyl shikimate-3-phosphate and inorganic phosphate. The sequence is that of 3-phosphoshikimate 1-carboxyvinyltransferase from Phenylobacterium zucineum (strain HLK1).